The chain runs to 219 residues: MKFMVTEQKTLIYPVINLITGQHNYIGFKCRISTNNANYVVHRVFSIQNKLSREHTASTKTKSQVRGGGKKPWKQKGTGRARAGSIRSPLWRGGGVVFGPKPKNVFFKINKKEIRLALYTVLSNALPKTTVVSSLEGLPNFISTQALIKFLRSLNVSLDNRVLIVVEKKETPLFLSCRNIKNLALIQADHLNVKSVILAQSLVVTLQALKIIYKTFNDN.

A disordered region spans residues 53-81 (REHTASTKTKSQVRGGGKKPWKQKGTGRA). Residues 68–79 (GGKKPWKQKGTG) show a composition bias toward basic residues.

It belongs to the universal ribosomal protein uL4 family. As to quaternary structure, part of the 50S ribosomal subunit.

The protein localises to the plastid. The protein resides in the chloroplast. Its function is as follows. Probably binds the 23S rRNA. The protein is Large ribosomal subunit protein uL4c (rpl4) of Cyanidium caldarium (Red alga).